The following is a 655-amino-acid chain: uncharacterized protein (655 aa).

A signal peptide spans 1-23 (MKRTIKYLSFLGLIPFLSITTIS). Residue cysteine 24 is the site of N-palmitoyl cysteine attachment. A lipid anchor (S-diacylglycerol cysteine) is attached at cysteine 24.

Belongs to the MG067/MG068/MG395 family.

It is found in the cell membrane. This is an uncharacterized protein from Mycoplasma capricolum subsp. capricolum (strain California kid / ATCC 27343 / NCTC 10154).